The sequence spans 433 residues: Malate synthase (433 aa).

Threonine 16–serine 17 is an acetyl-CoA binding site. Aspartate 52 provides a ligand contact to Mg(2+). Arginine 84 contributes to the acetyl-CoA binding site. Residues arginine 84, glutamate 158, and valine 191–aspartate 192 contribute to the glyoxylate site. Positions 158 and 192 each coordinate Mg(2+). Residues arginine 236 and leucine 259 each contribute to the acetyl-CoA site. Aspartate 388 serves as the catalytic Proton acceptor.

It belongs to the HpcH/HpaI aldolase family. In terms of assembly, homotrimer and homohexamer in equilibrium. Mg(2+) serves as cofactor.

The protein resides in the cytoplasm. It carries out the reaction glyoxylate + acetyl-CoA + H2O = (S)-malate + CoA + H(+). Its pathway is carbohydrate metabolism; glyoxylate cycle; (S)-malate from isocitrate: step 2/2. In terms of biological role, involved in the glyoxylate cycle which synthesizes precursors for carbohydrates from C2 compounds such as acetate. Catalyzes the Claisen condensation between acetyl-coenzyme A (acetyl-CoA) and glyoxylate to form the malyl-CoA intermediate that is subsequently hydrolyzed to produce malate and CoA. This chain is Malate synthase (aceB), found in Haloferax volcanii (strain ATCC 29605 / DSM 3757 / JCM 8879 / NBRC 14742 / NCIMB 2012 / VKM B-1768 / DS2) (Halobacterium volcanii).